A 499-amino-acid polypeptide reads, in one-letter code: Potassium voltage-gated channel subfamily A member 2 (499 aa).

The disordered stretch occupies residues 1–26; that stretch reads MTVATGDPVDEAAALPGHPQDTYDPE. Residues 1-125 are tetramerization domain; it reads MTVATGDPVD…YELGEEAMEM (125 aa). The Cytoplasmic segment spans residues 1-160; that stretch reads MTVATGDPVD…LLFEYPESSG (160 aa). The helical transmembrane segment at 161 to 182 threads the bilayer; it reads PARIIAIVSVMVILISIVSFCL. The Extracellular portion of the chain corresponds to 183–221; that stretch reads ETLPIFRDENEDMHGGGVTFHTYSNSTIGYQQSTSFTDP. A glycan (N-linked (GlcNAc...) asparagine) is linked at N207. Residues 222–243 traverse the membrane as a helical segment; that stretch reads FFIVETLCIIWFSFEFLVRFFA. C244 carries S-palmitoyl cysteine lipidation. The Cytoplasmic segment spans residues 244-254; it reads CPSKAGFFTNI. A helical membrane pass occupies residues 255-275; sequence MNIIDIVAIIPYFITLGTELA. Topologically, residues 276–289 are extracellular; it reads EKPEDAQQGQQAMS. The chain crosses the membrane as a helical; Voltage-sensor span at residues 290–310; it reads LAILRVIRLVRVFRIFKLSRH. Topologically, residues 311-325 are cytoplasmic; that stretch reads SKGLQILGQTLKASM. Residues 312-325 are S4-S5 linker; it reads KGLQILGQTLKASM. Residues 326-347 traverse the membrane as a helical segment; the sequence is RELGLLIFFLFIGVILFSSAVY. Residues 348–361 are Extracellular-facing; that stretch reads FAEADERDSQFPSI. An intramembrane region (helical) is located at residues 362 to 373; the sequence is PDAFWWAVVSMT. Positions 374-379 match the Selectivity filter motif; that stretch reads TVGYGD. Residues 374-381 lie within the membrane without spanning it; it reads TVGYGDMV. The Extracellular portion of the chain corresponds to 382–388; sequence PTTIGGK. The helical transmembrane segment at 389–417 threads the bilayer; the sequence is IVGSLCAIAGVLTIALPVPVIVSNFNYFY. At 418-499 the chain is on the cytoplasmic side; sequence HRETEGEEQA…VNITKMLTDV (82 aa). Y429 carries the phosphotyrosine modification. S434, S440, S441, and S449 each carry phosphoserine. Phosphotyrosine is present on Y458. Position 468 is a phosphoserine (S468). Residues 497 to 499 carry the PDZ-binding motif; that stretch reads TDV.

Belongs to the potassium channel family. A (Shaker) (TC 1.A.1.2) subfamily. Kv1.2/KCNA2 sub-subfamily. In terms of assembly, homotetramer and heterotetramer with other channel-forming alpha subunits, such as KCNA1, KCNA4, KCNA5, KCNA6 and KCNA7. Channel activity is regulated by interaction with beta subunits, including KCNAB1 and KCNAB2. Identified in a complex with KCNA1 and KCNAB2. Identified in a complex with KCNA5 and KCNAB1. Identified in a complex with KCNA4 and FYN. Interacts with PTK2B. Interacts (via C-terminus) with CTTN. Interacts with ADAM22. Interacts with CNTNAP2. Interacts (via C-terminus) with the PDZ domains of DLG1, DLG2 and DLG4. Interacts (via N-terminal cytoplasmic domain) with RHOA (GTP-bound form); this regulates channel activity by reducing location at the cell surface in response to CHRM1 activation. Interacts with DRD2. Interacts with SIGMAR1; cocaine consumption leads to increased interaction. Interacts with ADAM11. Interacts with LYNX1. Post-translationally, phosphorylated on tyrosine residues; phosphorylation increases in response to ischemia. Phosphorylated on tyrosine residues by activated PTK2B/PYK2. Phosphorylation on tyrosine residues suppresses ion channel activity. Phosphorylated on tyrosine residues in response to CHRM1 activation; this abolishes interaction with CTTN. This is probably due to endocytosis of the phosphorylated channel subunits. Phosphorylated on serine residues in response to increased cAMP levels; phosphorylation is apparently not catalyzed by PKA. In terms of processing, N-glycosylated, with complex, sialylated N-glycans. As to expression, detected in brain. Detected in cerebellum. Detected in mitral cells in the olfactory bulb. Detected in cochlea. Detected in cerebellum, particularly in the basket cell axon plexus and in the terminal regions around Purkinje cells (at protein level). Detected in juxtaparanodal regions in sciatic nerve. Detected in Schwann cells from sciatic nerve. Detected in dopamine neurons in substantia nigra. Detected in large myelinated fibers in juxtaparanodes in the CA3 and CA1 areas of the hippocampus. Detected in brain, in punctae on fiber tracts in brain stem and spinal cord, and on axons in the juxtaparanodal regions of the node of Ranvier (at protein level). Detected in dopamine neurons in the midbrain.

The protein localises to the cell membrane. The protein resides in the membrane. It is found in the cell projection. Its subcellular location is the axon. It localises to the synapse. The protein localises to the endoplasmic reticulum membrane. The protein resides in the lamellipodium membrane. It is found in the synaptosome. Its subcellular location is the presynaptic cell membrane. It localises to the dendrite. The protein localises to the perikaryon. The protein resides in the cell junction. It is found in the paranodal septate junction. The catalysed reaction is K(+)(in) = K(+)(out). Its activity is regulated as follows. Inhibited by 4-aminopyridine (4-AP), dendrotoxin (DTX) and charybdotoxin (CTX), but not by tetraethylammonium (TEA). Inhibited by tityustoxin-K alpha (TsTX-Kalpha), a toxin that is highly specific for KCNA2. Inhibited by maurotoxin. Inhibited by kappaM conotoxins kappaM-RIIIJ and kappaM-RIIIK. Functionally, voltage-gated potassium channel that mediates transmembrane potassium transport in excitable membranes, primarily in the brain and the central nervous system, but also in the cardiovascular system. Prevents aberrant action potential firing and regulates neuronal output. Forms tetrameric potassium-selective channels through which potassium ions pass in accordance with their electrochemical gradient. The channel alternates between opened and closed conformations in response to the voltage difference across the membrane. Can form functional homotetrameric channels and heterotetrameric channels that contain variable proportions of KCNA1, KCNA2, KCNA4, KCNA5, KCNA6, KCNA7, and possibly other family members as well; channel properties depend on the type of alpha subunits that are part of the channel. Channel properties are modulated by cytoplasmic beta subunits that regulate the subcellular location of the alpha subunits and promote rapid inactivation of delayed rectifier potassium channels. In vivo, membranes probably contain a mixture of heteromeric potassium channel complexes, making it difficult to assign currents observed in intact tissues to any particular potassium channel family member. Homotetrameric KCNA2 forms a delayed-rectifier potassium channel that opens in response to membrane depolarization, followed by slow spontaneous channel closure. In contrast, a heteromultimer formed by KCNA2 and KCNA4 shows rapid inactivation. Contributes to the regulation of action potentials in neurons. KCNA2-containing channels play a presynaptic role and prevent hyperexcitability and aberrant action potential firing. Response to toxins that are selective for KCNA1, respectively for KCNA2, suggests that heteromeric potassium channels composed of both KCNA1 and KCNA2 play a role in pacemaking and regulate the output of deep cerebellar nuclear neurons. Response to toxins that are selective for KCNA2-containing potassium channels suggests that in Purkinje cells, dendritic subthreshold KCNA2-containing potassium channels prevent random spontaneous calcium spikes, suppressing dendritic hyperexcitability without hindering the generation of somatic action potentials, and thereby play an important role in motor coordination. KCNA2-containing channels play a role in GABAergic transmission from basket cells to Purkinje cells in the cerebellum, and thereby play an import role in motor coordination. Plays a role in the induction of long-term potentiation of neuron excitability in the CA3 layer of the hippocampus. May function as down-stream effector for G protein-coupled receptors and inhibit GABAergic inputs to basolateral amygdala neurons. May contribute to the regulation of neurotransmitter release, such as gamma-aminobutyric acid (GABA). Contributes to the regulation of the axonal release of the neurotransmitter dopamine. Reduced KCNA2 expression plays a role in the perception of neuropathic pain after peripheral nerve injury, but not acute pain. Plays a role in the regulation of the time spent in non-rapid eye movement (NREM) sleep. This chain is Potassium voltage-gated channel subfamily A member 2 (Kcna2), found in Mus musculus (Mouse).